The primary structure comprises 286 residues: uncharacterized protein (286 aa).

The next 6 helical transmembrane spans lie at 52 to 74 (ILWT…LIGL), 79 to 101 (LIAI…FLFL), 142 to 161 (WWDP…VSFF), 168 to 190 (VLVF…GAIL), 203 to 225 (IQAT…VALV), and 257 to 276 (IIWI…ASFM).

It localises to the cell membrane. This is an uncharacterized protein from Archaeoglobus fulgidus (strain ATCC 49558 / DSM 4304 / JCM 9628 / NBRC 100126 / VC-16).